The primary structure comprises 215 residues: 3-demethoxyubiquinol 3-hydroxylase (215 aa).

Fe cation-binding residues include Glu64, Glu94, His97, Glu146, Glu178, and His181.

This sequence belongs to the COQ7 family. Fe cation is required as a cofactor.

It localises to the cell membrane. The enzyme catalyses a 5-methoxy-2-methyl-3-(all-trans-polyprenyl)benzene-1,4-diol + AH2 + O2 = a 3-demethylubiquinol + A + H2O. It participates in cofactor biosynthesis; ubiquinone biosynthesis. In terms of biological role, catalyzes the hydroxylation of 2-nonaprenyl-3-methyl-6-methoxy-1,4-benzoquinol during ubiquinone biosynthesis. In Pseudomonas paraeruginosa (strain DSM 24068 / PA7) (Pseudomonas aeruginosa (strain PA7)), this protein is 3-demethoxyubiquinol 3-hydroxylase.